Here is a 147-residue protein sequence, read N- to C-terminus: uncharacterized protein (147 aa).

The 147-residue stretch at 1–147 folds into the N-acetyltransferase domain; the sequence is MEIRRADKDD…RPESGGSGSE (147 aa).

It belongs to the acetyltransferase family.

This is an uncharacterized protein from Archaeoglobus fulgidus (strain ATCC 49558 / DSM 4304 / JCM 9628 / NBRC 100126 / VC-16).